The primary structure comprises 122 residues: Large ribosomal subunit protein uL14 (122 aa).

The protein belongs to the universal ribosomal protein uL14 family. As to quaternary structure, part of the 50S ribosomal subunit. Forms a cluster with proteins L3 and L19. In the 70S ribosome, L14 and L19 interact and together make contacts with the 16S rRNA in bridges B5 and B8.

Its function is as follows. Binds to 23S rRNA. Forms part of two intersubunit bridges in the 70S ribosome. The polypeptide is Large ribosomal subunit protein uL14 (Buchnera aphidicola subsp. Acyrthosiphon pisum (strain 5A)).